Here is a 293-residue protein sequence, read N- to C-terminus: Acetylglutamate kinase (293 aa).

Substrate is bound by residues 71 to 72 (GG), Arg93, and Asn186.

It belongs to the acetylglutamate kinase family. ArgB subfamily.

The protein localises to the cytoplasm. It carries out the reaction N-acetyl-L-glutamate + ATP = N-acetyl-L-glutamyl 5-phosphate + ADP. It functions in the pathway amino-acid biosynthesis; L-arginine biosynthesis; N(2)-acetyl-L-ornithine from L-glutamate: step 2/4. Its function is as follows. Catalyzes the ATP-dependent phosphorylation of N-acetyl-L-glutamate. The chain is Acetylglutamate kinase from Synechococcus sp. (strain WH7803).